A 198-amino-acid chain; its full sequence is MVTTYLLFIVAYLLGSIPFALVVGKIGYGIDIREHGSGNLGGTNTFRTLGKKAGFIVTIADILKGTLATSLPMVFGLDIHPLWFGLAAVLGHVYPIFAKFRGGKAVATSAGVLLCYSPVVFAILAVVFFTLLFTTRYVSLSSMVTAVVAVIASIVSGDKIFIIAMCLLAGMVIYKHRANIGRIINKTEPKANFSKKQK.

4 helical membrane-spanning segments follow: residues 4–24 (TYLLFIVAYLLGSIPFALVVG), 71–91 (LPMVFGLDIHPLWFGLAAVLG), 113–133 (LLCYSPVVFAILAVVFFTLLF), and 147–167 (VVAVIASIVSGDKIFIIAMCL).

It belongs to the PlsY family. Probably interacts with PlsX.

The protein localises to the cell membrane. The catalysed reaction is an acyl phosphate + sn-glycerol 3-phosphate = a 1-acyl-sn-glycero-3-phosphate + phosphate. The protein operates within lipid metabolism; phospholipid metabolism. Catalyzes the transfer of an acyl group from acyl-phosphate (acyl-PO(4)) to glycerol-3-phosphate (G3P) to form lysophosphatidic acid (LPA). This enzyme utilizes acyl-phosphate as fatty acyl donor, but not acyl-CoA or acyl-ACP. This is Glycerol-3-phosphate acyltransferase 2 from Bacillus cereus (strain ZK / E33L).